Consider the following 261-residue polypeptide: Pyridoxine-5'-phosphate oxidase (261 aa).

42-45 (RGDP) serves as a coordination point for pyridoxal 5'-phosphate. 95 to 98 (RMVL) serves as a coordination point for FMN. Lys100 contacts pyridoxal 5'-phosphate. Residues 110-111 (FT), 116-117 (RK), and Gln139 each bind FMN. Positions 157, 161, and 165 each coordinate pyridoxal 5'-phosphate. FMN-binding positions include 174-175 (QS) and Trp219. 225-227 (RLH) contacts pyridoxal 5'-phosphate. Arg229 contacts FMN. Thr238 bears the Phosphothreonine mark. At Ser241 the chain carries Phosphoserine.

This sequence belongs to the pyridoxamine 5'-phosphate oxidase family. In terms of assembly, homodimer. The cofactor is FMN.

The enzyme catalyses pyridoxamine 5'-phosphate + O2 + H2O = pyridoxal 5'-phosphate + H2O2 + NH4(+). It catalyses the reaction pyridoxine 5'-phosphate + O2 = pyridoxal 5'-phosphate + H2O2. It participates in cofactor metabolism; pyridoxal 5'-phosphate salvage; pyridoxal 5'-phosphate from pyridoxamine 5'-phosphate: step 1/1. The protein operates within cofactor metabolism; pyridoxal 5'-phosphate salvage; pyridoxal 5'-phosphate from pyridoxine 5'-phosphate: step 1/1. In terms of biological role, catalyzes the oxidation of either pyridoxine 5'-phosphate (PNP) or pyridoxamine 5'-phosphate (PMP) into pyridoxal 5'-phosphate (PLP). This is Pyridoxine-5'-phosphate oxidase (PNPO) from Bos taurus (Bovine).